We begin with the raw amino-acid sequence, 374 residues long: RNA polymerase sigma factor SigA (374 aa).

The sigma-70 factor domain-2 stretch occupies residues 141–211 (LAEANLRLVV…TRAIADQART (71 aa)). Residues 165-168 (DLIQ) carry the Interaction with polymerase core subunit RpoC motif. Positions 220-296 (ETINKLIRVQ…DQDATSPSDH (77 aa)) are sigma-70 factor domain-3. The sigma-70 factor domain-4 stretch occupies residues 309 to 362 (VLDTLTDREENVLRLRFGLDDGRTRTLEEVGRVFGVTRERIRQIEAKALRKLRH). The H-T-H motif DNA-binding region spans 335-354 (LEEVGRVFGVTRERIRQIEA).

Belongs to the sigma-70 factor family. RpoD/SigA subfamily. Interacts transiently with the RNA polymerase catalytic core.

The protein localises to the cytoplasm. Sigma factors are initiation factors that promote the attachment of RNA polymerase to specific initiation sites and are then released. This sigma factor is the primary sigma factor during exponential growth. In Listeria monocytogenes serovar 1/2a (strain ATCC BAA-679 / EGD-e), this protein is RNA polymerase sigma factor SigA.